The following is a 298-amino-acid chain: Protoheme IX farnesyltransferase (298 aa).

Helical transmembrane passes span 28 to 48 (VVAL…EELV), 50 to 70 (LKVL…AAAI), 95 to 117 (LSPA…TLYA), 121 to 138 (PLTA…AVVY), 149 to 169 (NIVI…TSVT), 176 to 196 (AVLL…ALAV), 222 to 242 (CIFL…LIGM), 243 to 263 (TGMI…AYAW), and 274 to 294 (AFNM…ILLV).

This sequence belongs to the UbiA prenyltransferase family. Protoheme IX farnesyltransferase subfamily.

Its subcellular location is the cell inner membrane. It carries out the reaction heme b + (2E,6E)-farnesyl diphosphate + H2O = Fe(II)-heme o + diphosphate. It functions in the pathway porphyrin-containing compound metabolism; heme O biosynthesis; heme O from protoheme: step 1/1. In terms of biological role, converts heme B (protoheme IX) to heme O by substitution of the vinyl group on carbon 2 of heme B porphyrin ring with a hydroxyethyl farnesyl side group. The protein is Protoheme IX farnesyltransferase of Idiomarina loihiensis (strain ATCC BAA-735 / DSM 15497 / L2-TR).